The primary structure comprises 1071 residues: DNA-directed RNA polymerase subunit beta (1071 aa).

It belongs to the RNA polymerase beta chain family. In terms of assembly, in plastids the minimal PEP RNA polymerase catalytic core is composed of four subunits: alpha, beta, beta', and beta''. When a (nuclear-encoded) sigma factor is associated with the core the holoenzyme is formed, which can initiate transcription.

The protein localises to the plastid. Its subcellular location is the chloroplast. It catalyses the reaction RNA(n) + a ribonucleoside 5'-triphosphate = RNA(n+1) + diphosphate. Functionally, DNA-dependent RNA polymerase catalyzes the transcription of DNA into RNA using the four ribonucleoside triphosphates as substrates. The protein is DNA-directed RNA polymerase subunit beta of Nymphaea alba (White water-lily).